Consider the following 238-residue polypeptide: Orotate phosphoribosyltransferase (238 aa).

K29 contributes to the 5-phospho-alpha-D-ribose 1-diphosphate binding site. Residue 37-38 (FF) coordinates orotate. 5-phospho-alpha-D-ribose 1-diphosphate contacts are provided by residues 87-88 (YK), R118, K119, K122, H124, and 144-152 (DDVITAGTA). The orotate site is built by T148 and R176.

It belongs to the purine/pyrimidine phosphoribosyltransferase family. PyrE subfamily. Homodimer.

The enzyme catalyses orotidine 5'-phosphate + diphosphate = orotate + 5-phospho-alpha-D-ribose 1-diphosphate. Its pathway is pyrimidine metabolism; UMP biosynthesis via de novo pathway; UMP from orotate: step 1/2. In terms of biological role, catalyzes the transfer of a ribosyl phosphate group from 5-phosphoribose 1-diphosphate to orotate, leading to the formation of orotidine monophosphate (OMP). The sequence is that of Orotate phosphoribosyltransferase (URA5) from Coccidioides immitis (strain RS) (Valley fever fungus).